A 1010-amino-acid polypeptide reads, in one-letter code: Signal peptide, CUB and EGF-like domain-containing protein 2 (1010 aa).

A signal peptide spans 1 to 24; the sequence is MGAVWTVRLLCLFLLLLNTRQSAA. One can recognise an EGF-like 1; calcium-binding domain in the interval 28–68; that stretch reads NTDQCAEGSDACHIDAICQNTPTSYKCTCKTGFKGDGKHCE. 8 cysteine pairs are disulfide-bonded: Cys32–Cys45, Cys39–Cys54, Cys56–Cys67, Cys73–Cys85, Cys81–Cys94, Cys96–Cys109, Cys115–Cys126, and Cys122–Cys135. The EGF-like 2; calcium-binding domain occupies 69 to 110; the sequence is DIDECDVEYNGGCVHECNNIPGNYRCTCLDGFHLAHDGHNCL. The 37-residue stretch at 111–147 folds into the EGF-like 3; calcium-binding domain; it reads DVDECVFNNGGCQHVCVNTMGSYECRCKQGFFLSDNQ. EGF-like domains lie at 160-196 and 200-235; these read CMNKEHGCGHICKESPKGGVACECRPGFELAKNQRGC and CNHGNGGCQHICEDTEQGPICRCHVRYMLHADGRTC. An N-linked (GlcNAc...) asparagine glycan is attached at Asn249. The 36-residue stretch at 269–304 folds into the EGF-like 6 domain; sequence CAVNNGGCDSTCKDTSTGVRCSCPVGFTLQPDGKSC. Residues 306 to 346 enclose the EGF-like 7; calcium-binding domain; it reads DIDECELHNGGCDHYCRNTIGSFECSCRKGFKLLTDERSCQ. Intrachain disulfides connect Cys310–Cys321, Cys317–Cys330, Cys332–Cys345, Cys351–Cys361, Cys357–Cys370, Cys372–Cys384, Cys390–Cys401, Cys397–Cys410, and Cys412–Cys425. One can recognise an EGF-like 8; calcium-binding domain in the interval 347–385; that stretch reads DIDECFFERTCDHTCVNSPGSFQCVCNKGYTLYGLAHCG. In terms of domain architecture, EGF-like 9; calcium-binding spans 386-426; it reads DINECSFNNGGCEHTCENTMGSFGCHCRAGYKLHWNKKDCI. N-linked (GlcNAc...) asparagine glycosylation is found at Asn488, Asn703, Asn774, and Asn803. Cysteines 822 and 848 form a disulfide. The 113-residue stretch at 822–934 folds into the CUB domain; the sequence is CGGELGEFTG…KGFQVPYVTY (113 aa). The tract at residues 860 to 869 is interaction with the cholesterol-anchor of SHH; the sequence is ILVVVPEIYL. A disulfide bridge connects residues Cys875 and Cys896. Residue Asn982 is glycosylated (N-linked (GlcNAc...) asparagine).

In terms of assembly, interacts with SHH via the cholesterol anchor of the dually lipid-modified SHH (ShhNp). Interacts with PTCH1. Forms homooligomers and heterooligomers with SCUBE1 and SCUBE3. Interacts with VEGFR2. Post-translationally, N-glycosylated.

The protein resides in the secreted. Its subcellular location is the cell surface. In terms of biological role, lipid-binding protein required for SHH long-range signaling by binding to the dually lipid-modified SHH (ShhNp) and by promoting ShhNp mobilization, solubilization and release from the cell membrane. Acts by enhancing the proteolytic processing (shedding) of the lipid-modified N- and C- terminal of ShhNp at the cell surface. Synergizes with DISP1 to cause an increase in SHH secretion. Probable cell surface coreceptor for VEGFR2 involved in VEGFR2-mediated angiogenesis. In Danio rerio (Zebrafish), this protein is Signal peptide, CUB and EGF-like domain-containing protein 2 (scube2).